A 293-amino-acid polypeptide reads, in one-letter code: 4-hydroxy-tetrahydrodipicolinate synthase (293 aa).

Thr-45 contributes to the pyruvate binding site. Tyr-133 functions as the Proton donor/acceptor in the catalytic mechanism. Lys-161 functions as the Schiff-base intermediate with substrate in the catalytic mechanism. Ile-203 provides a ligand contact to pyruvate.

This sequence belongs to the DapA family. In terms of assembly, homotetramer; dimer of dimers.

The protein localises to the cytoplasm. It carries out the reaction L-aspartate 4-semialdehyde + pyruvate = (2S,4S)-4-hydroxy-2,3,4,5-tetrahydrodipicolinate + H2O + H(+). It participates in amino-acid biosynthesis; L-lysine biosynthesis via DAP pathway; (S)-tetrahydrodipicolinate from L-aspartate: step 3/4. Functionally, catalyzes the condensation of (S)-aspartate-beta-semialdehyde [(S)-ASA] and pyruvate to 4-hydroxy-tetrahydrodipicolinate (HTPA). The chain is 4-hydroxy-tetrahydrodipicolinate synthase from Pseudoalteromonas atlantica (strain T6c / ATCC BAA-1087).